The chain runs to 193 residues: MIYGSLDHGFIEVIVGPMFSGKSEELIRRIKRAQIAKQKVQVFKPAIDDRYSIDKVVSHNGTNINAISVVKAFEIIELLEEDTEVIAIDEIQFFDHSIVDVVREIADLGKRVICAGLDMDFRGEPFGPTPDVMAIAESVDKLTAICVKCGNPATRTQRLINGKPAKYDDPIILVGAHETYEARCRKCHEVPRT.

Residues G16–S23 and D89–Q92 each bind ATP. E90 functions as the Proton acceptor in the catalytic mechanism. Positions 146, 149, 184, and 187 each coordinate Zn(2+).

This sequence belongs to the thymidine kinase family. As to quaternary structure, homotetramer.

It is found in the cytoplasm. The catalysed reaction is thymidine + ATP = dTMP + ADP + H(+). The polypeptide is Thymidine kinase (Thermoanaerobacter pseudethanolicus (strain ATCC 33223 / 39E) (Clostridium thermohydrosulfuricum)).